Reading from the N-terminus, the 347-residue chain is NADH-ubiquinone oxidoreductase chain 2 (347 aa).

The next 10 helical transmembrane spans lie at 3–23 (PIIY…VMIS), 25–45 (HWLL…PVLM), 59–79 (YFLT…INLL), 89–109 (MFNP…LGLS), 149–169 (INPN…GWGG), 178–198 (IMAY…PYNT), 200–220 (MTIL…MLLI), 237–257 (MPVI…LPPL), 274–294 (ESII…YFYM), and 325–345 (LLPT…ALSS).

The protein belongs to the complex I subunit 2 family. As to quaternary structure, core subunit of respiratory chain NADH dehydrogenase (Complex I) which is composed of 45 different subunits. Interacts with TMEM242.

The protein resides in the mitochondrion inner membrane. The enzyme catalyses a ubiquinone + NADH + 5 H(+)(in) = a ubiquinol + NAD(+) + 4 H(+)(out). Core subunit of the mitochondrial membrane respiratory chain NADH dehydrogenase (Complex I) which catalyzes electron transfer from NADH through the respiratory chain, using ubiquinone as an electron acceptor. Essential for the catalytic activity and assembly of complex I. This is NADH-ubiquinone oxidoreductase chain 2 from Sus scrofa (Pig).